A 410-amino-acid chain; its full sequence is NADH-quinone oxidoreductase subunit D (410 aa).

This sequence belongs to the complex I 49 kDa subunit family. NDH-1 is composed of 14 different subunits. Subunits NuoB, C, D, E, F, and G constitute the peripheral sector of the complex.

The protein localises to the cell inner membrane. It carries out the reaction a quinone + NADH + 5 H(+)(in) = a quinol + NAD(+) + 4 H(+)(out). NDH-1 shuttles electrons from NADH, via FMN and iron-sulfur (Fe-S) centers, to quinones in the respiratory chain. The immediate electron acceptor for the enzyme in this species is believed to be ubiquinone. Couples the redox reaction to proton translocation (for every two electrons transferred, four hydrogen ions are translocated across the cytoplasmic membrane), and thus conserves the redox energy in a proton gradient. The polypeptide is NADH-quinone oxidoreductase subunit D (Nitratiruptor sp. (strain SB155-2)).